Here is a 186-residue protein sequence, read N- to C-terminus: Elongation factor P (186 aa).

This sequence belongs to the elongation factor P family.

It is found in the cytoplasm. The protein operates within protein biosynthesis; polypeptide chain elongation. Its function is as follows. Involved in peptide bond synthesis. Stimulates efficient translation and peptide-bond synthesis on native or reconstituted 70S ribosomes in vitro. Probably functions indirectly by altering the affinity of the ribosome for aminoacyl-tRNA, thus increasing their reactivity as acceptors for peptidyl transferase. The protein is Elongation factor P of Prochlorococcus marinus (strain MIT 9215).